The following is a 150-amino-acid chain: D-aminoacyl-tRNA deacylase (150 aa).

Positions 140-141 (GP) match the Gly-cisPro motif, important for rejection of L-amino acids motif.

This sequence belongs to the DTD family. Homodimer.

Its subcellular location is the cytoplasm. It catalyses the reaction glycyl-tRNA(Ala) + H2O = tRNA(Ala) + glycine + H(+). It carries out the reaction a D-aminoacyl-tRNA + H2O = a tRNA + a D-alpha-amino acid + H(+). An aminoacyl-tRNA editing enzyme that deacylates mischarged D-aminoacyl-tRNAs. Also deacylates mischarged glycyl-tRNA(Ala), protecting cells against glycine mischarging by AlaRS. Acts via tRNA-based rather than protein-based catalysis; rejects L-amino acids rather than detecting D-amino acids in the active site. By recycling D-aminoacyl-tRNA to D-amino acids and free tRNA molecules, this enzyme counteracts the toxicity associated with the formation of D-aminoacyl-tRNA entities in vivo and helps enforce protein L-homochirality. In Eremothecium gossypii (strain ATCC 10895 / CBS 109.51 / FGSC 9923 / NRRL Y-1056) (Yeast), this protein is D-aminoacyl-tRNA deacylase (DTD1).